The following is a 62-amino-acid chain: Large ribosomal subunit protein eL24 (62 aa).

Zn(2+)-binding residues include C6, C9, C32, and C36. The C4-type zinc finger occupies 6 to 36 (CYFCGKMLEPGTGKLYVKKDGSTYFMCSSKC).

Belongs to the eukaryotic ribosomal protein eL24 family. As to quaternary structure, part of the 50S ribosomal subunit. Forms a cluster with proteins L3 and L14. Requires Zn(2+) as cofactor.

Functionally, binds to the 23S rRNA. The polypeptide is Large ribosomal subunit protein eL24 (Methanosarcina acetivorans (strain ATCC 35395 / DSM 2834 / JCM 12185 / C2A)).